A 416-amino-acid chain; its full sequence is Imidazolonepropionase (416 aa).

His-82 and His-84 together coordinate Fe(3+). Positions 82 and 84 each coordinate Zn(2+). 4-imidazolone-5-propanoate-binding residues include Arg-91, Tyr-154, and His-187. Residue Tyr-154 coordinates N-formimidoyl-L-glutamate. His-252 is a binding site for Fe(3+). Zn(2+) is bound at residue His-252. 4-imidazolone-5-propanoate is bound at residue Glu-255. Asp-326 contributes to the Fe(3+) binding site. Asp-326 provides a ligand contact to Zn(2+). Residues Asn-328 and Gly-330 each contribute to the N-formimidoyl-L-glutamate site. A 4-imidazolone-5-propanoate-binding site is contributed by Ser-331.

The protein belongs to the metallo-dependent hydrolases superfamily. HutI family. The cofactor is Zn(2+). It depends on Fe(3+) as a cofactor.

The protein localises to the cytoplasm. The enzyme catalyses 4-imidazolone-5-propanoate + H2O = N-formimidoyl-L-glutamate. It functions in the pathway amino-acid degradation; L-histidine degradation into L-glutamate; N-formimidoyl-L-glutamate from L-histidine: step 3/3. Functionally, catalyzes the hydrolytic cleavage of the carbon-nitrogen bond in imidazolone-5-propanoate to yield N-formimidoyl-L-glutamate. It is the third step in the universal histidine degradation pathway. The chain is Imidazolonepropionase from Parabacteroides distasonis (strain ATCC 8503 / DSM 20701 / CIP 104284 / JCM 5825 / NCTC 11152).